A 146-amino-acid chain; its full sequence is Large ribosomal subunit protein uL15 (146 aa).

Residues 1-51 (MKLHELKPAKGSRKVRNRVGRGTSSGNGKTSGRGQKGQKARSGGGVRLGFE) are disordered. Residues 10-19 (KGSRKVRNRV) are compositionally biased toward basic residues. Composition is skewed to gly residues over residues 23–35 (TSSG…GRGQ) and 42–51 (SGGGVRLGFE).

The protein belongs to the universal ribosomal protein uL15 family. Part of the 50S ribosomal subunit.

Its function is as follows. Binds to the 23S rRNA. In Streptococcus equi subsp. equi (strain 4047), this protein is Large ribosomal subunit protein uL15.